The chain runs to 156 residues: MNINVTLIGQTVAFIIFVWFCMKFVWPPLMNAIEERQKRIADGLADADRAVKDLELAQAKATDQLKEAKATANEIIEQANKRKAQIVDEAKAEADAERAKIIAQGKAEIEAERNRVKEDLRKQVAALAIAGAEKILERSIDEAAHSDIVNKLVAEI.

Residues 5 to 25 traverse the membrane as a helical segment; sequence VTLIGQTVAFIIFVWFCMKFV.

This sequence belongs to the ATPase B chain family. As to quaternary structure, F-type ATPases have 2 components, F(1) - the catalytic core - and F(0) - the membrane proton channel. F(1) has five subunits: alpha(3), beta(3), gamma(1), delta(1), epsilon(1). F(0) has three main subunits: a(1), b(2) and c(10-14). The alpha and beta chains form an alternating ring which encloses part of the gamma chain. F(1) is attached to F(0) by a central stalk formed by the gamma and epsilon chains, while a peripheral stalk is formed by the delta and b chains.

Its subcellular location is the cell inner membrane. F(1)F(0) ATP synthase produces ATP from ADP in the presence of a proton or sodium gradient. F-type ATPases consist of two structural domains, F(1) containing the extramembraneous catalytic core and F(0) containing the membrane proton channel, linked together by a central stalk and a peripheral stalk. During catalysis, ATP synthesis in the catalytic domain of F(1) is coupled via a rotary mechanism of the central stalk subunits to proton translocation. Its function is as follows. Component of the F(0) channel, it forms part of the peripheral stalk, linking F(1) to F(0). The sequence is that of ATP synthase subunit b from Shewanella loihica (strain ATCC BAA-1088 / PV-4).